The chain runs to 379 residues: UDP-4-amino-4-deoxy-L-arabinose--oxoglutarate aminotransferase (379 aa).

Position 182 is an N6-(pyridoxal phosphate)lysine (K182).

It belongs to the DegT/DnrJ/EryC1 family. ArnB subfamily. In terms of assembly, homodimer. It depends on pyridoxal 5'-phosphate as a cofactor.

The catalysed reaction is UDP-4-amino-4-deoxy-beta-L-arabinose + 2-oxoglutarate = UDP-beta-L-threo-pentopyranos-4-ulose + L-glutamate. It functions in the pathway nucleotide-sugar biosynthesis; UDP-4-deoxy-4-formamido-beta-L-arabinose biosynthesis; UDP-4-deoxy-4-formamido-beta-L-arabinose from UDP-alpha-D-glucuronate: step 2/3. The protein operates within bacterial outer membrane biogenesis; lipopolysaccharide biosynthesis. Functionally, catalyzes the conversion of UDP-4-keto-arabinose (UDP-Ara4O) to UDP-4-amino-4-deoxy-L-arabinose (UDP-L-Ara4N). The modified arabinose is attached to lipid A and is required for resistance to polymyxin and cationic antimicrobial peptides. This chain is UDP-4-amino-4-deoxy-L-arabinose--oxoglutarate aminotransferase, found in Shigella sonnei (strain Ss046).